Here is a 196-residue protein sequence, read N- to C-terminus: Dehydrogenase RED3 (196 aa).

Residues Ser47, Asp74, Asn101, Arg134, Tyr166, and Lys170 each contribute to the NADP(+) site. The active-site Proton acceptor is the Tyr166. The active-site Lowers pKa of active site Tyr is Lys170.

This sequence belongs to the short-chain dehydrogenases/reductases (SDR) family.

It carries out the reaction a primary alcohol + NAD(+) = an aldehyde + NADH + H(+). The catalysed reaction is a secondary alcohol + NAD(+) = a ketone + NADH + H(+). It participates in mycotoxin biosynthesis. Dehydrogenase; part of the Tox1B locus, one of the 2 loci that mediate the biosynthesis of T-toxin, a family of linear polyketides 37 to 45 carbons in length, of which the major component is 41 carbons, and which leads to high virulence to maize. One of the PKSs (PKS1 or PKS2) could synthesize a precursor, used subsequently by the other PKS as starter unit, to add additional carbons. Variability in the length of the final carbon backbone C35-47 could be achieved by varying the number of condensation cycles, or use of different starter or extender units or might be due to decarboxylation of the penultimate product, catalyzed by DEC1. Additional proteins are required for the biosynthesis of T-toxin, including oxidoreductases RED1, RED2, RED3, LAM1 and OXI1, as well as esterase TOX9. In Cochliobolus heterostrophus (strain C4 / ATCC 48331 / race T) (Southern corn leaf blight fungus), this protein is Dehydrogenase RED3.